The following is a 314-amino-acid chain: Olfactory receptor 5P76 (314 aa).

Topologically, residues 1–28 are extracellular; the sequence is MAFLEDGNHTAVTGFILLGLTDDPVLRV. An N-linked (GlcNAc...) asparagine glycan is attached at Asn-8. Residues 29–49 traverse the membrane as a helical segment; that stretch reads VLFVIILCIYLVTVSGNLSTI. Topologically, residues 50–57 are cytoplasmic; that stretch reads LLIRVSSQ. The chain crosses the membrane as a helical span at residues 58–78; the sequence is LHHPMYFFLSHLASADIGYSS. The Extracellular portion of the chain corresponds to 79–102; it reads SVTPNMLVNFLVERNTISYLGCGI. Cys-100 and Cys-192 are joined by a disulfide. The chain crosses the membrane as a helical span at residues 103–123; it reads QLGSAVFFGTVECFLLAAMAY. The Cytoplasmic portion of the chain corresponds to 124-136; the sequence is DRFIAICSPLLYS. A helical transmembrane segment spans residues 137-157; that stretch reads NKMSTQVCVQLLVGSYIGGFL. The Extracellular portion of the chain corresponds to 158 to 199; sequence NASSFTLSFFSLVFCGPNRVNHFFCDFAPLVKLSCSDVSVPA. A helical transmembrane segment spans residues 200 to 220; sequence VVPSFTAGSIIIVTIFVIAVS. Over 221–240 the chain is Cytoplasmic; it reads YIYILITILKMRSTEGRQKA. The chain crosses the membrane as a helical span at residues 241-261; sequence FSTCTSHLTAVTLFYGTITFI. The Extracellular segment spans residues 262-274; the sequence is YVMPKSSYSTDQN. Residues 275 to 295 traverse the membrane as a helical segment; that stretch reads KVVSVFYMVVVPMLNPLIYSL. At 296–314 the chain is on the cytoplasmic side; it reads RNKEIKGALKRQLAKNTFS.

The protein belongs to the G-protein coupled receptor 1 family.

It localises to the cell membrane. Its function is as follows. Potential odorant receptor. In Mus musculus (Mouse), this protein is Olfactory receptor 5P76.